The primary structure comprises 205 residues: LexA repressor (205 aa).

Positions 28 to 48 form a DNA-binding region, H-T-H motif; that stretch reads RAEIATRLGFKSANAAEEHLK. Active-site for autocatalytic cleavage activity residues include Ser-122 and Lys-159.

Belongs to the peptidase S24 family. As to quaternary structure, homodimer.

The enzyme catalyses Hydrolysis of Ala-|-Gly bond in repressor LexA.. Its function is as follows. Represses a number of genes involved in the response to DNA damage (SOS response), including recA and lexA. In the presence of single-stranded DNA, RecA interacts with LexA causing an autocatalytic cleavage which disrupts the DNA-binding part of LexA, leading to derepression of the SOS regulon and eventually DNA repair. This is LexA repressor from Shewanella denitrificans (strain OS217 / ATCC BAA-1090 / DSM 15013).